A 215-amino-acid polypeptide reads, in one-letter code: Probable phosphoglycerate mutase GpmB (215 aa).

Substrate is bound by residues 8–15, 21–22, R58, R60, 82–85, and 151–152; these read RHGETLWN, QG, ELNM, and GM. The Tele-phosphohistidine intermediate role is filled by H9. E82 serves as the catalytic Proton donor/acceptor.

Belongs to the phosphoglycerate mutase family. GpmB subfamily.

The catalysed reaction is (2R)-2-phosphoglycerate = (2R)-3-phosphoglycerate. The protein operates within carbohydrate degradation; glycolysis; pyruvate from D-glyceraldehyde 3-phosphate: step 3/5. The protein is Probable phosphoglycerate mutase GpmB of Erwinia tasmaniensis (strain DSM 17950 / CFBP 7177 / CIP 109463 / NCPPB 4357 / Et1/99).